Here is a 482-residue protein sequence, read N- to C-terminus: MKFIIKLFPEITIKSQSVRLRFIKILTGNIRNVLKHYDETLAVVRHWDNIEVRAKDENQRLAIRDALTRIPGIHHILEVEDVPFTDMHDIFEKALVQYRDQLEGKTFCVRVKRRGKHDFSSIDVERYVGGGLNQHIESARVKLTNPEVTVHLEVEDDRLLLIKGRYEGIGGFPIGTQEDVLSLISGGFDSGVSSYMLMRRGCRVHYCFFNLGGAAHEIGVRQVAHYLWNRFGSSHRVRFVAINFEPVVGEILEKIDDGQMGVILKRMMVRAASKVAERYGVQALVTGEALGQVSSQTLTNLRLIDNVSDTLILRPLISYDKEHIINLARQIGTEDFARTMPEYCGVISKSPTVKAVKSKIEAEEEKFDFSILDKVVEEANNVDIREIAQQTEQEVVEVETVNGFGPNDVILDIRSIDEQEDKPLKVEGIDVVSLPFYKLSTKFGDLDQNKTWLLWCERGVMSRLQALYLREQGFNNVKVYRP.

Positions 61–165 (LAIRDALTRI…DDRLLLIKGR (105 aa)) constitute a THUMP domain. ATP contacts are provided by residues 183-184 (LI), K265, G287, and Q296. C344 and C456 are oxidised to a cystine. The 79-residue stretch at 404–482 (FGPNDVILDI…GFNNVKVYRP (79 aa)) folds into the Rhodanese domain. The Cysteine persulfide intermediate role is filled by C456.

This sequence belongs to the ThiI family.

The protein resides in the cytoplasm. It catalyses the reaction [ThiI sulfur-carrier protein]-S-sulfanyl-L-cysteine + a uridine in tRNA + 2 reduced [2Fe-2S]-[ferredoxin] + ATP + H(+) = [ThiI sulfur-carrier protein]-L-cysteine + a 4-thiouridine in tRNA + 2 oxidized [2Fe-2S]-[ferredoxin] + AMP + diphosphate. The enzyme catalyses [ThiS sulfur-carrier protein]-C-terminal Gly-Gly-AMP + S-sulfanyl-L-cysteinyl-[cysteine desulfurase] + AH2 = [ThiS sulfur-carrier protein]-C-terminal-Gly-aminoethanethioate + L-cysteinyl-[cysteine desulfurase] + A + AMP + 2 H(+). Its pathway is cofactor biosynthesis; thiamine diphosphate biosynthesis. In terms of biological role, catalyzes the ATP-dependent transfer of a sulfur to tRNA to produce 4-thiouridine in position 8 of tRNAs, which functions as a near-UV photosensor. Also catalyzes the transfer of sulfur to the sulfur carrier protein ThiS, forming ThiS-thiocarboxylate. This is a step in the synthesis of thiazole, in the thiamine biosynthesis pathway. The sulfur is donated as persulfide by IscS. The chain is tRNA sulfurtransferase from Escherichia coli (strain ATCC 8739 / DSM 1576 / NBRC 3972 / NCIMB 8545 / WDCM 00012 / Crooks).